The sequence spans 533 residues: Lymphocyte cytosolic protein 2 (533 aa).

One can recognise an SAM domain in the interval 12–78 (VLAWNSDNLA…SQDINKNEER (67 aa)). Phosphotyrosine is present on tyrosine 23. 2 disordered regions span residues 78 to 359 (RRSI…PLAH) and 374 to 419 (SASL…TPLD). Over residues 94-144 (ETESHEEDDGGWSSFEDDYESPNDDDPDGEDDGDYESPNEEEQALVDDAAD) the composition is skewed to acidic residues. Over residues 151-172 (NNEEALQSSILPPNSFHNTNSM) the composition is skewed to polar residues. Residues 186–201 (PPVPPLRPKPALPPLP) are compositionally biased toward pro residues. A phosphoserine mark is found at serine 207 and serine 210. The segment covering 340–354 (NTFPSRSVQPSSKNT) has biased composition (polar residues). Phosphoserine is present on residues serine 376 and serine 410. Residues 400 to 411 (LPVPNRPQPPSP) show a composition bias toward pro residues. Residues 422 to 530 (WYVSYITRPE…RYQCTLTHAA (109 aa)) form the SH2 domain.

As to quaternary structure, interacts with SLA. Interacts with CBLB. Interacts with GRB2. Interacts with SHB. Interacts with PRAM1. Interacts (via SH2 domain) with CD6 (via tyrosine phosphorylated C-terminus). Interacts with FYB1 and the phosphorylated form of FYB2. Interacts with 14-3-3 adapter/YWHAZ; this phosphorylation leads to YWHAZ proteolytic degradation. Interacts with VAV1; this interaction plays a role in TCR-mediated cytokine production. Interacts with AGER; this interaction plays an important role in AGER-mediated pro-inflammatory responses and cytokine release. Post-translationally, phosphorylated after T-cell receptor activation by ZAP70, ITK and TXK, which leads to the up-regulation of Th1 preferred cytokine IL-2. SYK-dependent phosphorylation is required for recruitment of PI3K signaling components. Highly expressed in spleen, thymus, and peripheral blood leukocytes.

Its subcellular location is the cytoplasm. In terms of biological role, adapter protein primarily involved in signaling pathways within T-cells, as well as other immune cells such as platelets, mast cells, and natural killer (NK) cells. Plays a crucial role for transducing signal from the T-cell receptor (TCR) after antigen recognition leading to T-cell activation. Mechanistically, once phosphorylated by the kinase ZAP70, mediates interactions with the guanine-nucleotide exchange factor VAV1, the adapter protein NCK and the kinase ITK. In turn, stimulates the activation of PKC-theta/PRKCQ and NF-kappa-B transcriptional activity in response to CD3 and CD28 costimulation. Also plays an essential role in AGER-induced signaling pathways including p38 MAPK and ERK1/2 activation leading to cytokine release and pro-inflammatory responses. This is Lymphocyte cytosolic protein 2 (Lcp2) from Mus musculus (Mouse).